The chain runs to 279 residues: Phospholipase A and acyltransferase 5 (279 aa).

Disordered regions lie at residues 1-53 (MGLS…GLNS) and 70-117 (QLPA…ENEG). A compositionally biased stretch (polar residues) spans 97-106 (LETTPSQKAD). Positions 135–249 (LIEIFRIGYE…LRYGVPRSQQ (115 aa)) constitute an LRAT domain. Catalysis depends on residues His-145 and His-157. Cys-233 serves as the catalytic Acyl-thioester intermediate.

Belongs to the H-rev107 family. As to expression, highest expression level in testis and pancreas.

It localises to the cytoplasm. The protein resides in the cytosol. The catalysed reaction is a 1,2-diacyl-sn-glycero-3-phosphocholine + H2O = a 1-acyl-sn-glycero-3-phosphocholine + a fatty acid + H(+). It catalyses the reaction a 1,2-diacyl-sn-glycero-3-phosphocholine + H2O = a 2-acyl-sn-glycero-3-phosphocholine + a fatty acid + H(+). It carries out the reaction 1-hexadecanoyl-2-(5Z,8Z,11Z,14Z-eicosatetraenoyl)-sn-glycero-3-phosphocholine + 1,2-di-(9Z-octadecenoyl)-sn-glycero-3-phosphoethanolamine = N-(5Z,8Z,11Z,14Z-eicosatetraenoyl)-1,2-di-(9Z-octadecenoyl)-sn-glycero-3-phosphoethanolamine + 1-hexadecanoyl-sn-glycero-3-phosphocholine + H(+). The enzyme catalyses 1,2-di-(9Z-octadecenoyl)-sn-glycero-3-phosphoethanolamine + 1,2-dihexadecanoyl-sn-glycero-3-phosphocholine = N-hexadecanoyl-1,2-di-(9Z-octadecenoyl)-sn-glycero-3-phosphoethanolamine + 1-hexadecanoyl-sn-glycero-3-phosphocholine + H(+). The catalysed reaction is 1,2-di-(9Z-octadecenoyl)-sn-glycero-3-phosphoethanolamine + 1,2-dihexadecanoyl-sn-glycero-3-phosphocholine = N-hexadecanoyl-1,2-di-(9Z-octadecenoyl)-sn-glycero-3-phosphoethanolamine + 2-hexadecanoyl-sn-glycero-3-phosphocholine + H(+). It catalyses the reaction a 1,2-diacyl-sn-glycero-3-phosphoethanolamine + a 1,2-diacyl-sn-glycero-3-phosphocholine = an N-acyl-1,2-diacyl-sn-glycero-3-phosphoethanolamine + a 1-acyl-sn-glycero-3-phosphocholine + H(+). It carries out the reaction a 1,2-diacyl-sn-glycero-3-phosphoethanolamine + a 1,2-diacyl-sn-glycero-3-phosphocholine = an N-acyl-1,2-diacyl-sn-glycero-3-phosphoethanolamine + a 2-acyl-sn-glycero-3-phosphocholine + H(+). The enzyme catalyses 1-hexadecanoyl-2-(9Z-octadecenoyl)-sn-glycero-3-phosphocholine + 1,2-di-(9Z-octadecenoyl)-sn-glycero-3-phosphoethanolamine = N,1,2-tri-(9Z-octadecenoyl)-sn-glycero-3-phosphoethanolamine + 1-hexadecanoyl-sn-glycero-3-phosphocholine + H(+). Functionally, exhibits both phospholipase A1/2 and acyltransferase activities. Shows phospholipase A1 (PLA1) and A2 (PLA2) activity, catalyzing the calcium-independent release of fatty acids from the sn-1 or sn-2 position of glycerophospholipids. Shows N-acyltransferase activity, catalyzing the calcium-independent transfer of a fatty acyl group at the sn-1 position of phosphatidylcholine (PC) and other glycerophospholipids to the primary amine of phosphatidylethanolamine (PE), forming N-acylphosphatidylethanolamine (NAPE), which serves as precursor for N-acylethanolamines (NAEs). This is Phospholipase A and acyltransferase 5 from Homo sapiens (Human).